We begin with the raw amino-acid sequence, 149 residues long: Ribosome maturation factor RimP (149 aa).

The protein belongs to the RimP family.

It localises to the cytoplasm. Required for maturation of 30S ribosomal subunits. This Neisseria gonorrhoeae (strain NCCP11945) protein is Ribosome maturation factor RimP.